The sequence spans 179 residues: Large ribosomal subunit protein uL5 (179 aa).

The protein belongs to the universal ribosomal protein uL5 family. In terms of assembly, part of the 50S ribosomal subunit; part of the 5S rRNA/L5/L18/L25 subcomplex. Contacts the 5S rRNA and the P site tRNA. Forms a bridge to the 30S subunit in the 70S ribosome.

In terms of biological role, this is one of the proteins that bind and probably mediate the attachment of the 5S RNA into the large ribosomal subunit, where it forms part of the central protuberance. In the 70S ribosome it contacts protein S13 of the 30S subunit (bridge B1b), connecting the 2 subunits; this bridge is implicated in subunit movement. Contacts the P site tRNA; the 5S rRNA and some of its associated proteins might help stabilize positioning of ribosome-bound tRNAs. This chain is Large ribosomal subunit protein uL5, found in Rickettsia bellii (strain OSU 85-389).